The primary structure comprises 80 residues: Acyl carrier protein (80 aa).

One can recognise a Carrier domain in the interval Met1–Lys79. Ser39 carries the O-(pantetheine 4'-phosphoryl)serine modification.

It belongs to the acyl carrier protein (ACP) family. 4'-phosphopantetheine is transferred from CoA to a specific serine of apo-ACP by AcpS. This modification is essential for activity because fatty acids are bound in thioester linkage to the sulfhydryl of the prosthetic group.

The protein resides in the cytoplasm. Its pathway is lipid metabolism; fatty acid biosynthesis. Functionally, carrier of the growing fatty acid chain in fatty acid biosynthesis. In Prochlorococcus marinus (strain MIT 9515), this protein is Acyl carrier protein.